We begin with the raw amino-acid sequence, 517 residues long: N-acetylglucosamine-1-phosphodiester alpha-N-acetylglucosaminidase (517 aa).

The N-terminal stretch at 1–25 is a signal peptide; the sequence is MAAPRGPGLFLIPALLGLLGVAWCS. Positions 26–49 are cleaved as a propeptide — removed in mature form; that stretch reads LSFGVSRDDDLLLPYPLARRRPSR. Positions 49–75 are disordered; sequence RDCARVRSGSPEQESWPPPPTNPGASH. Residues 50-453 lie on the Lumenal side of the membrane; it reads DCARVRSGSP…ASFTRTTWLA (404 aa). 5 disulfides stabilise this stretch: Cys116–Cys149, Cys133–Cys324, Cys308–Cys315, Cys363–Cys374, and Cys381–Cys390. Asn215 and Asn297 each carry an N-linked (GlcNAc...) asparagine glycan. Residues 359–391 form the EGF-like domain; it reads SELDCGPSNCSQHGLCTETGCHCDAGWTGSNCS. N-linked (GlcNAc...) asparagine glycosylation is found at Asn367, Asn389, and Asn421. A helical transmembrane segment spans residues 454-474; that stretch reads LTLTLIFLLLISTGVNVSLFL. Over 475–517 the chain is Cytoplasmic; that stretch reads GSRAERNRHLDGDYVYHPLQEVNGEALTAEKEHMEETSNPFKD. Residues 488-491 carry the Tyrosine-based internalization motif motif; it reads YVYH. Residues 488-495 form a mediates the interaction with AP4M1 region; the sequence is YVYHPLQE. Positions 511–515 match the NPF internalization motif motif; sequence TSNPF.

As to quaternary structure, homotetramer arranged as two disulfide-linked homodimers. Interacts with AP4M1. Post-translationally, the precursor is cleaved and activated in the trans-Golgi network by a furin endopeptidase.

It is found in the golgi apparatus. Its subcellular location is the golgi stack membrane. The protein resides in the trans-Golgi network. The enzyme catalyses N(4)-[6-(N-acetyl-alpha-D-glucosaminyl-1-phospho)-alpha-D-mannosyl-(1-&gt;2)-alpha-D-mannosyl-(glycan)]-L-asparaginyl-[protein] + H2O = N(4)-[6-phospho-alpha-D-mannosyl-(1-&gt;2)-alpha-D-mannosyl-(glycan)]-L-asparaginyl-[protein] + N-acetyl-D-glucosamine + H(+). It participates in protein modification; protein glycosylation. Its function is as follows. Catalyzes the second step in the formation of the mannose 6-phosphate targeting signal on lysosomal enzyme oligosaccharides by removing GlcNAc residues from GlcNAc-alpha-P-mannose moieties, which are formed in the first step. Also hydrolyzes UDP-GlcNAc, a sugar donor for Golgi N-acetylglucosaminyltransferases. This Mus musculus (Mouse) protein is N-acetylglucosamine-1-phosphodiester alpha-N-acetylglucosaminidase (Nagpa).